The following is a 335-amino-acid chain: Deoxyhypusine hydroxylase (335 aa).

HEAT-like PBS-type repeat units lie at residues L74–D100, C107–D133, K203–G233, F241–D267, and V274–D301. Fe cation-binding residues include H76, E77, H109, and E110. The Fe cation site is built by H243, E244, H276, and E277.

This sequence belongs to the deoxyhypusine hydroxylase family. The cofactor is Fe(2+).

The protein localises to the cytoplasm. It localises to the nucleus. It catalyses the reaction [eIF5A protein]-deoxyhypusine + AH2 + O2 = [eIF5A protein]-hypusine + A + H2O. The protein operates within protein modification; eIF5A hypusination. Catalyzes the hydroxylation of the N(6)-(4-aminobutyl)-L-lysine intermediate to form hypusine, an essential post-translational modification only found in mature eIF-5A factor. This is Deoxyhypusine hydroxylase from Coccidioides immitis (strain RS) (Valley fever fungus).